Reading from the N-terminus, the 85-residue chain is Large ribosomal subunit protein bL31B (85 aa).

It belongs to the bacterial ribosomal protein bL31 family. Type B subfamily. Part of the 50S ribosomal subunit.

The chain is Large ribosomal subunit protein bL31B from Clavibacter sepedonicus (Clavibacter michiganensis subsp. sepedonicus).